Consider the following 137-residue polypeptide: Large ribosomal subunit protein uL16 (137 aa).

The protein belongs to the universal ribosomal protein uL16 family. As to quaternary structure, part of the 50S ribosomal subunit.

Binds 23S rRNA and is also seen to make contacts with the A and possibly P site tRNAs. This Acinetobacter baumannii (strain AB307-0294) protein is Large ribosomal subunit protein uL16.